The chain runs to 185 residues: MSNTTTTATTTNINENKVREIYKAPMKIGEIEYIPYQGESQIQDLMSLIEKELPEPYSIFTYRFFLNQWPELCFLAYCNGQLIGVIISKKQTHKLLERGYIGMIVVDKTFRRQKIGSTLIKLTIEKMIEMKCDEVVLETIFTNIQAISLYENLGFTRIKRLFRYYTMGADAVRLLLPLNDKFLIK.

Positions 31–179 constitute an N-acetyltransferase domain; the sequence is IEYIPYQGES…DAVRLLLPLN (149 aa).

It belongs to the acetyltransferase family. MAK3 subfamily.

Its function is as follows. Probable catalytic component of a complex displaying alpha (N-terminal) acetyltransferase activity. The sequence is that of N-alpha-acetyltransferase 30 from Dictyostelium discoideum (Social amoeba).